A 278-amino-acid chain; its full sequence is MNTYHPFSLTTPSTLMIQDWAQTNQNNKEVIAGFTTKNGGVSQKPFESLNTGLHVHDKDADVVKNREYIADMFNTDLQSWVFADQTHDNRVQKVTQRDRGKGAREYHTALKATDGIYTNEKNVFLALCFADCVPLFFYDPVKSLVGVAHAGWKGTVKQIGREMVKQWTEKEGSNPSDIYAVIGPSISGACYTVDDRVMDAVRALPVSADLAANQTAKAQYQLDLKELNRLILMDSGLASEQISVSGLCTESEPSLFYSHRRDQGKTGRMMSFIGMKEA.

Zn(2+)-binding residues include His-87, Cys-132, and His-149.

Belongs to the purine nucleoside phosphorylase YfiH/LACC1 family. Homodimer. Requires Cu(2+) as cofactor. Zn(2+) serves as cofactor.

The enzyme catalyses adenosine + phosphate = alpha-D-ribose 1-phosphate + adenine. It carries out the reaction S-methyl-5'-thioadenosine + phosphate = 5-(methylsulfanyl)-alpha-D-ribose 1-phosphate + adenine. The catalysed reaction is inosine + phosphate = alpha-D-ribose 1-phosphate + hypoxanthine. It catalyses the reaction adenosine + H2O + H(+) = inosine + NH4(+). Its function is as follows. Purine nucleoside enzyme that catalyzes the phosphorolysis of adenosine and inosine nucleosides, yielding D-ribose 1-phosphate and the respective free bases, adenine and hypoxanthine. Also catalyzes the phosphorolysis of S-methyl-5'-thioadenosine into adenine and S-methyl-5-thio-alpha-D-ribose 1-phosphate. Also has adenosine deaminase activity. The chain is Purine nucleoside phosphorylase YlmD (ylmD) from Bacillus subtilis (strain 168).